The chain runs to 37 residues: Large ribosomal subunit protein bL36c (37 aa).

This sequence belongs to the bacterial ribosomal protein bL36 family.

Its subcellular location is the plastid. The protein localises to the chloroplast. This chain is Large ribosomal subunit protein bL36c, found in Populus alba (White poplar).